Reading from the N-terminus, the 379-residue chain is Mannitol-1-phosphate 5-dehydrogenase (379 aa).

3–14 (ALHFGAGNIGRG) provides a ligand contact to NAD(+).

The protein belongs to the mannitol dehydrogenase family.

The enzyme catalyses D-mannitol 1-phosphate + NAD(+) = beta-D-fructose 6-phosphate + NADH + H(+). This chain is Mannitol-1-phosphate 5-dehydrogenase, found in Actinobacillus pleuropneumoniae serotype 5b (strain L20).